A 203-amino-acid polypeptide reads, in one-letter code: Ribonuclease HII (203 aa).

An RNase H type-2 domain is found at 14–203 (GVIAGVDEVG…ILNSTKRALL (190 aa)). A divalent metal cation contacts are provided by Asp20, Glu21, and Asp112.

This sequence belongs to the RNase HII family. The cofactor is Mn(2+). Mg(2+) is required as a cofactor.

The protein localises to the cytoplasm. The enzyme catalyses Endonucleolytic cleavage to 5'-phosphomonoester.. Endonuclease that specifically degrades the RNA of RNA-DNA hybrids. The protein is Ribonuclease HII of Wolbachia sp. subsp. Brugia malayi (strain TRS).